A 236-amino-acid chain; its full sequence is Phosphoribosylaminoimidazole-succinocarboxamide synthase (236 aa).

The protein belongs to the SAICAR synthetase family.

It carries out the reaction 5-amino-1-(5-phospho-D-ribosyl)imidazole-4-carboxylate + L-aspartate + ATP = (2S)-2-[5-amino-1-(5-phospho-beta-D-ribosyl)imidazole-4-carboxamido]succinate + ADP + phosphate + 2 H(+). The protein operates within purine metabolism; IMP biosynthesis via de novo pathway; 5-amino-1-(5-phospho-D-ribosyl)imidazole-4-carboxamide from 5-amino-1-(5-phospho-D-ribosyl)imidazole-4-carboxylate: step 1/2. This chain is Phosphoribosylaminoimidazole-succinocarboxamide synthase, found in Pseudomonas savastanoi pv. phaseolicola (strain 1448A / Race 6) (Pseudomonas syringae pv. phaseolicola (strain 1448A / Race 6)).